The sequence spans 466 residues: Coagulation factor VII (466 aa).

An N-terminal signal peptide occupies residues 1–20 (MVSQALRLLCLLLGLQGCLA). Positions 21–60 (AGGVAEASGGETRDMPWKPGPHRVFITQEEAHGVLHRRRR) are excised as a propeptide. The Gla domain maps to 61 to 105 (ANAFLEELRPGSLERECKEEQCSFEEAREIFKDLERTKLFWISYS). A 4-carboxyglutamate mark is found at E66, E67, E74, E76, E79, E80, E85, E86, E89, and E95. C77 and C82 are disulfide-bonded. The region spanning 106–142 (DGDQCASSPCQNGGSCKDQLQSYICFCLPAFEGRNCE) is the EGF-like 1; calcium-binding domain. 10 cysteine pairs are disulfide-bonded: C110–C121, C115–C130, C132–C141, C151–C162, C158–C172, C174–C187, C195–C322, C219–C224, C238–C254, and C370–C389. O-linked (Glc...) serine; alternate glycosylation is present at S112. S112 is a glycosylation site (O-linked (Xyl...) serine; alternate). O-linked (Fuc) serine glycosylation occurs at S120. (3R)-3-hydroxyaspartate is present on D123. In terms of domain architecture, EGF-like 2 spans 147-188 (DQLICVNENGGCEQYCSDHTGTKRSCRCHEGYSLLADGVSCT). N-linked (GlcNAc...) asparagine glycosylation occurs at N205. Residues 213 to 452 (IVGGKVCPKG…YIEWLQKLMR (240 aa)) form the Peptidase S1 domain. Active-site charge relay system residues include H253 and D302. N382 carries an N-linked (GlcNAc...) asparagine glycan. D398 is a substrate binding site. Residues C400 and C428 are joined by a disulfide bond. S404 (charge relay system) is an active-site residue.

This sequence belongs to the peptidase S1 family. Heterodimer of a light chain and a heavy chain linked by a disulfide bond. In terms of processing, the vitamin K-dependent, enzymatic carboxylation of some glutamate residues allows the modified protein to bind calcium. Post-translationally, the iron and 2-oxoglutarate dependent 3-hydroxylation of aspartate and asparagine is (R) stereospecific within EGF domains. O-glycosylated. O-fucosylated by POFUT1 on a conserved serine or threonine residue found in the consensus sequence C2-X(4,5)-[S/T]-C3 of EGF domains, where C2 and C3 are the second and third conserved cysteines. In terms of processing, can be either O-glucosylated or O-xylosylated at Ser-112 by POGLUT1.

It localises to the secreted. It carries out the reaction Selective cleavage of Arg-|-Ile bond in factor X to form factor Xa.. Its function is as follows. Initiates the extrinsic pathway of blood coagulation. Serine protease that circulates in the blood in a zymogen form. Factor VII is converted to factor VIIa by factor Xa, factor XIIa, factor IXa, or thrombin by minor proteolysis. In the presence of tissue factor and calcium ions, factor VIIa then converts factor X to factor Xa by limited proteolysis. Factor VIIa also converts factor IX to factor IXa in the presence of tissue factor and calcium. The polypeptide is Coagulation factor VII (F7) (Pan paniscus (Pygmy chimpanzee)).